The primary structure comprises 391 residues: Elongation factor Tu (391 aa).

In terms of domain architecture, tr-type G spans 10 to 201; the sequence is KPHVNIGTIG…AVDEYIPTPA (192 aa). Residues 19 to 26 form a G1 region; it reads GHVDHGKT. Position 19 to 26 (19 to 26) interacts with GTP; sequence GHVDHGKT. Thr26 contacts Mg(2+). Residues 55–59 are G2; sequence GITIS. The segment at 76–79 is G3; the sequence is DCPG. Residues 76–80 and 131–134 contribute to the GTP site; these read DCPGH and NKVD. A G4 region spans residues 131-134; sequence NKVD. Residues 169–171 are G5; that stretch reads SAL.

This sequence belongs to the TRAFAC class translation factor GTPase superfamily. Classic translation factor GTPase family. EF-Tu/EF-1A subfamily. Monomer.

The protein localises to the cytoplasm. The enzyme catalyses GTP + H2O = GDP + phosphate + H(+). GTP hydrolase that promotes the GTP-dependent binding of aminoacyl-tRNA to the A-site of ribosomes during protein biosynthesis. This is Elongation factor Tu from Ruegeria pomeroyi (strain ATCC 700808 / DSM 15171 / DSS-3) (Silicibacter pomeroyi).